A 171-amino-acid polypeptide reads, in one-letter code: tRNA-specific adenosine deaminase (171 aa).

Residues Glu6 to Glu133 enclose the CMP/dCMP-type deaminase domain. His57 contacts Zn(2+). Glu59 functions as the Proton donor in the catalytic mechanism. 2 residues coordinate Zn(2+): Cys87 and Cys90.

This sequence belongs to the cytidine and deoxycytidylate deaminase family. Homodimer. It depends on Zn(2+) as a cofactor.

The enzyme catalyses adenosine(34) in tRNA + H2O + H(+) = inosine(34) in tRNA + NH4(+). Its function is as follows. Catalyzes the deamination of adenosine to inosine at the wobble position 34 of tRNA(Arg2). The polypeptide is tRNA-specific adenosine deaminase (Streptococcus pyogenes serotype M3 (strain ATCC BAA-595 / MGAS315)).